A 308-amino-acid chain; its full sequence is Transcription initiation factor IIB (308 aa).

Tandem repeats lie at residues 124–207 (NELE…LREL) and 218–299 (DYVT…ELTQ).

It belongs to the TFIIB family.

Stabilizes TBP binding to an archaeal box-A promoter. Also responsible for recruiting RNA polymerase II to the pre-initiation complex (DNA-TBP-TFIIB). The chain is Transcription initiation factor IIB from Sulfurisphaera tokodaii (strain DSM 16993 / JCM 10545 / NBRC 100140 / 7) (Sulfolobus tokodaii).